The sequence spans 361 residues: Peptide chain release factor 1 (361 aa).

Gln-235 bears the N5-methylglutamine mark. The interval 286–305 (IDSARSAERKQKVGSGDRSE) is disordered.

This sequence belongs to the prokaryotic/mitochondrial release factor family. In terms of processing, methylated by PrmC. Methylation increases the termination efficiency of RF1.

The protein localises to the cytoplasm. Peptide chain release factor 1 directs the termination of translation in response to the peptide chain termination codons UAG and UAA. The protein is Peptide chain release factor 1 of Rhodopseudomonas palustris (strain HaA2).